Consider the following 656-residue polypeptide: DNA ligase (656 aa).

NAD(+) contacts are provided by residues 32–36 (DAVYD) and 81–82 (SL). The N6-AMP-lysine intermediate role is filled by Lys112. NAD(+) is bound by residues Arg133, Glu167, and Lys306. 4 residues coordinate Zn(2+): Cys400, Cys403, Cys416, and Cys421. A BRCT domain is found at 577–656 (KSSSVFNNKT…ELLKRLKELD (80 aa)).

The protein belongs to the NAD-dependent DNA ligase family. LigA subfamily. Mg(2+) is required as a cofactor. Requires Mn(2+) as cofactor.

It carries out the reaction NAD(+) + (deoxyribonucleotide)n-3'-hydroxyl + 5'-phospho-(deoxyribonucleotide)m = (deoxyribonucleotide)n+m + AMP + beta-nicotinamide D-nucleotide.. Functionally, DNA ligase that catalyzes the formation of phosphodiester linkages between 5'-phosphoryl and 3'-hydroxyl groups in double-stranded DNA using NAD as a coenzyme and as the energy source for the reaction. It is essential for DNA replication and repair of damaged DNA. The chain is DNA ligase from Helicobacter pylori (strain P12).